A 283-amino-acid polypeptide reads, in one-letter code: SNAP25 homologous protein SNAP32 (283 aa).

Disordered regions lie at residues 1 to 64 and 192 to 212; these read MSGR…AAAR and LGLSDHPPQSNARQFHSEPTS. Residues 198 to 212 show a composition bias toward polar residues; it reads PPQSNARQFHSEPTS. One can recognise a t-SNARE coiled-coil homology domain in the interval 218-280; it reads EMEKAKQDDG…KGANTRARRL (63 aa).

Belongs to the SNAP-25 family. As to quaternary structure, interacts with SYP121. Expressed in roots, culms and leaves.

It is found in the membrane. Functionally, t-SNARE involved in diverse vesicle trafficking and membrane fusion processes. May be involved in resistance to the rice blast fungus Magnaporthe oryzae. May contribute to host resistance to rice blast through interaction with SYP121. In Oryza sativa subsp. japonica (Rice), this protein is SNAP25 homologous protein SNAP32.